The primary structure comprises 85 residues: Large ribosomal subunit protein bL27 (85 aa).

The segment at 1–24 (MAHKKGVGSSRNGRDSDGQRLGCK) is disordered.

The protein belongs to the bacterial ribosomal protein bL27 family.

In Geotalea daltonii (strain DSM 22248 / JCM 15807 / FRC-32) (Geobacter daltonii), this protein is Large ribosomal subunit protein bL27.